Consider the following 347-residue polypeptide: D-alanine--D-alanine ligase (347 aa).

One can recognise an ATP-grasp domain in the interval 131–333 (KRVLESAGIA…YPELIERLVD (203 aa)). ATP is bound at residue 161–216 (EEKLAYPVFTKPSNMGSSVGISKSENQEELRPALELAFRYDSRVLVEQGVNAREIE). 3 residues coordinate Mg(2+): Asp-287, Glu-300, and Asn-302.

The protein belongs to the D-alanine--D-alanine ligase family. Requires Mg(2+) as cofactor. The cofactor is Mn(2+).

It localises to the cytoplasm. It carries out the reaction 2 D-alanine + ATP = D-alanyl-D-alanine + ADP + phosphate + H(+). It functions in the pathway cell wall biogenesis; peptidoglycan biosynthesis. In terms of biological role, cell wall formation. In Streptococcus pneumoniae (strain Taiwan19F-14), this protein is D-alanine--D-alanine ligase.